Reading from the N-terminus, the 179-residue chain is Ubiquitin-conjugating enzyme E2 C (179 aa).

A compositionally biased stretch (polar residues) spans 1-14; it reads MASQNRDPAATSVT. The interval 1–31 is disordered; sequence MASQNRDPAATSVTAARKGAEPSGGAARGPV. Alanine 2 is subject to N-acetylalanine. Serine 3 is subject to Phosphoserine. The UBC core domain occupies 30–175; that stretch reads PVGKRLQQEL…LQETYSKQVT (146 aa). Cysteine 114 functions as the Glycyl thioester intermediate in the catalytic mechanism.

This sequence belongs to the ubiquitin-conjugating enzyme family. As to quaternary structure, component of the APC/C complex, composed of at least 14 distinct subunits that assemble into a complex of at least 19 chains with a combined molecular mass of around 1.2 MDa. Within this complex, directly interacts with ANAPC2. In terms of processing, autoubiquitinated by the APC/C complex, leading to its degradation by the proteasome. Its degradation plays a central role in APC/C regulation, allowing cyclin-A accumulation before S phase entry. APC/C substrates inhibit the autoubiquitination of UBE2C/UBCH10 but not its E2 function, hence APC/C remaining active until its substrates have been destroyed.

It carries out the reaction S-ubiquitinyl-[E1 ubiquitin-activating enzyme]-L-cysteine + [E2 ubiquitin-conjugating enzyme]-L-cysteine = [E1 ubiquitin-activating enzyme]-L-cysteine + S-ubiquitinyl-[E2 ubiquitin-conjugating enzyme]-L-cysteine.. The enzyme catalyses S-ubiquitinyl-[E1 ubiquitin-activating enzyme]-L-cysteine + [acceptor protein]-L-lysine = [E1 ubiquitin-activating enzyme]-L-cysteine + N(6)-monoubiquitinyl-[acceptor protein]-L-lysine.. It participates in protein modification; protein ubiquitination. Functionally, accepts ubiquitin from the E1 complex and catalyzes its covalent attachment to other proteins. In vitro catalyzes 'Lys-11'- and 'Lys-48'-linked polyubiquitination. Acts as an essential factor of the anaphase promoting complex/cyclosome (APC/C), a cell cycle-regulated ubiquitin ligase that controls progression through mitosis. Acts by initiating 'Lys-11'-linked polyubiquitin chains on APC/C substrates, leading to the degradation of APC/C substrates by the proteasome and promoting mitotic exit. The protein is Ubiquitin-conjugating enzyme E2 C (UBE2C) of Macaca fascicularis (Crab-eating macaque).